Reading from the N-terminus, the 164-residue chain is Cell division protein SepF (164 aa).

The disordered stretch occupies residues I29 to P57.

Belongs to the SepF family. Homodimer. Interacts with FtsZ.

It is found in the cytoplasm. Its function is as follows. Cell division protein that is part of the divisome complex and is recruited early to the Z-ring. Probably stimulates Z-ring formation, perhaps through the cross-linking of FtsZ protofilaments. Its function overlaps with FtsA. This Exiguobacterium sibiricum (strain DSM 17290 / CCUG 55495 / CIP 109462 / JCM 13490 / 255-15) protein is Cell division protein SepF.